Consider the following 100-residue polypeptide: Protein SAMBA (100 aa).

Positions 1 to 40 are disordered; that stretch reads MNGASPAHSLVSTTAVAGGGGSSGAAAGLDDFHFPPDIPS.

Interacts with CDC27B and CYCA2-3. In terms of tissue distribution, expressed in embryos, germinating seeds, hypocotyls and pollen grains.

Functionally, plays an important role in organ size control. Acts as negative regulator of the anaphase-promoting complex/cyclosome (APC/C). Regulates cell proliferation during early development by targeting CYCA2-3 for APC/C-mediated degradation. Required for mitosis I during pollen microspore development. This is Protein SAMBA from Arabidopsis thaliana (Mouse-ear cress).